The primary structure comprises 480 residues: DnaJ homolog subfamily A member 3, mitochondrial (480 aa).

Arginine 58 bears the Omega-N-methylarginine; by CARM1 mark. One can recognise a J domain in the interval 93-158 (DYYQILGVPR…VKRKQYDAYG (66 aa)). Lysine 134 is modified (N6-acetyllysine). The segment at 223–301 (GVNKEFTVNI…CRGAGQAKQK (79 aa)) adopts a CR-type zinc-finger fold. Cysteine 236 is a Zn(2+) binding site. CXXCXGXG motif repeat units lie at residues 236-243 (CERCNGKG), 253-260 (CHYCGGSG), 275-282 (CRRCGGRG), and 289-296 (CVVCRGAG). Residue arginine 238 is modified to Omega-N-methylarginine; by CARM1. Positions 239, 253, 256, 275, 278, 289, and 292 each coordinate Zn(2+). Arginine 293 is subject to Omega-N-methylarginine; by CARM1. Serine 398 carries the phosphoserine modification. Polar residues predominate over residues 443-456 (LTSSGGSTMDSSAG). Residues 443–471 (LTSSGGSTMDSSAGSKARREAGEDEEGFL) form a disordered region.

In terms of assembly, interacts with JAK2, HSPA9B and IFN-gammaR2 chain. Interacts with Ras GTPase-activating protein 1 (RASA1). Isoform 2 interacts with MUSK (via the cytoplasmic domain). In terms of processing, tyrosine phosphorylated. As to expression, widely expressed with highest levels in heart, liver, lung and skeletal muscles. Also expressed in keratinocytes; expression level and distribution is altered in basal cell carcinomas.

The protein localises to the mitochondrion matrix. It localises to the cytoplasm. It is found in the cytosol. The protein resides in the postsynaptic cell membrane. Modulates apoptotic signal transduction or effector structures within the mitochondrial matrix. Affect cytochrome C release from the mitochondria and caspase 3 activation, but not caspase 8 activation. Isoform 1 increases apoptosis triggered by both TNF and the DNA-damaging agent mytomycin C; in sharp contrast, isoform 2 suppresses apoptosis. Can modulate IFN-gamma-mediated transcriptional activity. Isoform 2 may play a role in neuromuscular junction development as an effector of the MUSK signaling pathway. In Homo sapiens (Human), this protein is DnaJ homolog subfamily A member 3, mitochondrial (DNAJA3).